The chain runs to 235 residues: Peroxynitrite isomerase 2 (235 aa).

The short motif at 82 to 88 is the GXWXGXG element; it reads GVWRGEG. Residues Lys-198 and His-225 each coordinate heme b.

Belongs to the nitrobindin family. As to quaternary structure, homodimer. Heme b is required as a cofactor.

It catalyses the reaction peroxynitrite = nitrate. It participates in nitrogen metabolism. Its function is as follows. Heme-binding protein able to scavenge peroxynitrite and to protect free L-tyrosine against peroxynitrite-mediated nitration, by acting as a peroxynitrite isomerase that converts peroxynitrite to nitrate. Therefore, this protein likely plays a role in peroxynitrite sensing and in the detoxification of reactive nitrogen and oxygen species (RNS and ROS, respectively). Is able to bind nitric oxide (NO) in vitro, but may act as a sensor of peroxynitrite levels in vivo. In Mycolicibacterium paratuberculosis (strain ATCC BAA-968 / K-10) (Mycobacterium paratuberculosis), this protein is Peroxynitrite isomerase 2.